A 784-amino-acid chain; its full sequence is E3 ubiquitin-protein ligase RNF43 (784 aa).

The signal sequence occupies residues 1-23; sequence MSGGHQLQLAVLWPWLLMATLHA. Residues 24 to 197 lie on the Extracellular side of the membrane; the sequence is GFGHTGRVLA…LKEPPAGANY (174 aa). Residues N62 and N92 are each glycosylated (N-linked (GlcNAc...) asparagine). C91 and C119 are joined by a disulfide. A helical membrane pass occupies residues 198-218; sequence DVWILLTVVGTVFVIILASVL. Residues 219–784 lie on the Cytoplasmic side of the membrane; it reads RIRCRPHHSR…ELEELCEQAV (566 aa). An RING-type; atypical zinc finger spans residues 272 to 313; the sequence is CAICLEEFSEGQELRVISCLHEFHRTCVDPWLYQHRTCPLCM. Disordered regions lie at residues 364–407, 459–478, and 516–671; these read TSVA…HLAV, ADGP…SSDS, and DLQG…SLPP. Residues 386-395 show a composition bias toward basic residues; sequence RHQRLPRTSH. Residues 464 to 478 are compositionally biased toward low complexity; the sequence is SDSSSGPCHGSSSDS. Residues 548–568 show a composition bias toward basic residues; it reads IHYHRHRHHHYKRQFQWHGRK. Residues 583 to 608 show a composition bias toward polar residues; it reads SHTQLEPSLPDQQLITPNPTASSMLP. Residues 618 to 629 show a composition bias toward low complexity; it reads EPAPGLAEASSP.

This sequence belongs to the ZNRF3 family. In terms of assembly, interacts with AKAP8L, NONO and SFPQ. Interacts with FZD5. Identified in a complex composed of RNF43, LGR5 and RSPO1. Interacts with RSPO2. Interacts with LMBR1L. In terms of processing, autoubiquitinated. Expressed in crypt base columnar cells of small intestinal epithelium. Crypt base columnar cells are small cycling cells residing between the terminally differentiated Paneth cells at crypt bottoms. Colocalizes with Lgr5-positive stem cells.

The protein localises to the cell membrane. It localises to the endoplasmic reticulum membrane. It is found in the nucleus envelope. The catalysed reaction is S-ubiquitinyl-[E2 ubiquitin-conjugating enzyme]-L-cysteine + [acceptor protein]-L-lysine = [E2 ubiquitin-conjugating enzyme]-L-cysteine + N(6)-ubiquitinyl-[acceptor protein]-L-lysine.. It participates in protein modification; protein ubiquitination. In terms of biological role, E3 ubiquitin-protein ligase that acts as a negative regulator of the Wnt signaling pathway by mediating the ubiquitination, endocytosis and subsequent degradation of Wnt receptor complex components Frizzled. Acts on both canonical and non-canonical Wnt signaling pathway. Along with RSPO2 and ZNRF3, constitutes a master switch that governs limb specification. This Mus musculus (Mouse) protein is E3 ubiquitin-protein ligase RNF43 (Rnf43).